The following is a 412-amino-acid chain: Multifunctional CCA protein (412 aa).

Positions 8 and 11 each coordinate ATP. Positions 8 and 11 each coordinate CTP. Residues Asp21 and Asp23 each coordinate Mg(2+). 3 residues coordinate ATP: Arg91, Arg137, and Arg140. 3 residues coordinate CTP: Arg91, Arg137, and Arg140. Residues 228–329 form the HD domain; the sequence is TGIHTLMTLS…VKLFDSIDAW (102 aa).

This sequence belongs to the tRNA nucleotidyltransferase/poly(A) polymerase family. Bacterial CCA-adding enzyme type 1 subfamily. Monomer. Can also form homodimers and oligomers. Mg(2+) serves as cofactor. Requires Ni(2+) as cofactor.

The catalysed reaction is a tRNA precursor + 2 CTP + ATP = a tRNA with a 3' CCA end + 3 diphosphate. The enzyme catalyses a tRNA with a 3' CCA end + 2 CTP + ATP = a tRNA with a 3' CCACCA end + 3 diphosphate. Functionally, catalyzes the addition and repair of the essential 3'-terminal CCA sequence in tRNAs without using a nucleic acid template. Adds these three nucleotides in the order of C, C, and A to the tRNA nucleotide-73, using CTP and ATP as substrates and producing inorganic pyrophosphate. tRNA 3'-terminal CCA addition is required both for tRNA processing and repair. Also involved in tRNA surveillance by mediating tandem CCA addition to generate a CCACCA at the 3' terminus of unstable tRNAs. While stable tRNAs receive only 3'-terminal CCA, unstable tRNAs are marked with CCACCA and rapidly degraded. This Escherichia coli O6:H1 (strain CFT073 / ATCC 700928 / UPEC) protein is Multifunctional CCA protein.